Reading from the N-terminus, the 195-residue chain is Probable GTP-binding protein EngB (195 aa).

An EngB-type G domain is found at 24–195; the sequence is DIPEIALAGR…AAWDAILSKI (172 aa). GTP contacts are provided by residues 32 to 39, 59 to 63, 77 to 80, 144 to 147, and 176 to 178; these read GRSNVGKS, GKTQL, DVPG, TKAD, and FSS. The Mg(2+) site is built by S39 and T61.

It belongs to the TRAFAC class TrmE-Era-EngA-EngB-Septin-like GTPase superfamily. EngB GTPase family. Mg(2+) is required as a cofactor.

In terms of biological role, necessary for normal cell division and for the maintenance of normal septation. This Streptococcus sanguinis (strain SK36) protein is Probable GTP-binding protein EngB.